The primary structure comprises 213 residues: Thymidylate kinase (213 aa).

9–16 (GIEGCGKT) lines the ATP pocket.

This sequence belongs to the thymidylate kinase family.

The catalysed reaction is dTMP + ATP = dTDP + ADP. Functionally, phosphorylation of dTMP to form dTDP in both de novo and salvage pathways of dTTP synthesis. This is Thymidylate kinase from Geobacter sulfurreducens (strain ATCC 51573 / DSM 12127 / PCA).